A 299-amino-acid polypeptide reads, in one-letter code: 4-diphosphocytidyl-2-C-methyl-D-erythritol kinase (299 aa).

Lys-20 is a catalytic residue. 106 to 116 (PMGGGLGGGSS) provides a ligand contact to ATP. The active site involves Asp-148.

This sequence belongs to the GHMP kinase family. IspE subfamily. In terms of assembly, homodimer.

It carries out the reaction 4-CDP-2-C-methyl-D-erythritol + ATP = 4-CDP-2-C-methyl-D-erythritol 2-phosphate + ADP + H(+). The protein operates within isoprenoid biosynthesis; isopentenyl diphosphate biosynthesis via DXP pathway; isopentenyl diphosphate from 1-deoxy-D-xylulose 5-phosphate: step 3/6. In terms of biological role, catalyzes the phosphorylation of the position 2 hydroxy group of 4-diphosphocytidyl-2C-methyl-D-erythritol. This is 4-diphosphocytidyl-2-C-methyl-D-erythritol kinase from Yersinia pseudotuberculosis serotype O:1b (strain IP 31758).